Consider the following 232-residue polypeptide: Homeobox protein Rhox13 (232 aa).

Residues 45–114 (QAAVASSHDS…EAAAPSVAAV (70 aa)) form a disordered region. Acidic residues predominate over residues 68–105 (SDSESESDSESESDSSDSSDESDDDSSTSDEDTSDPEE). A DNA-binding region (homeobox) is located at residues 148–207 (RRGPPFHFAQWQVEEMESLFEETQYPDLLTRGELARTLNVPEVKVKVWFTNRRAKQRKIE).

The protein belongs to the paired-like homeobox family.

The protein resides in the nucleus. In terms of biological role, probable transcription factor. This chain is Homeobox protein Rhox13, found in Mus musculus (Mouse).